The sequence spans 106 residues: MSYYMSPIVQKITGADPGTFVLFYVPECPYCQRALSTLRERNLPFKGYNINNISGNMPRLLQVLTTYSNLTGFNPYHTTKPIIFINGKFIGGMDDLAKYLDVQFTQ.

The region spanning 8 to 106 (IVQKITGADP…AKYLDVQFTQ (99 aa)) is the Glutaredoxin domain. A disulfide bond links Cys28 and Cys31.

This sequence belongs to the glutaredoxin family.

The protein resides in the virion. The chain is Probable glutaredoxin from Acanthamoeba polyphaga mimivirus (APMV).